The following is a 384-amino-acid chain: MAKVAALIVAAGRGKRFGGDLPKQYQTLGGRPILRHTLARFAAHPDVALVRAIIHPEDRDLYGAAAHGLATLLDAVEGGAERQDSVRLGLESLTDVAPDYVLIHDGARPLVDGALIDRVIAALADHPGAIPALAVADTLKRGAGGMIGQTVDRAGLWRAQTPQGFRYDAILAAHRAQAGTMLTDDAAVLEAAGGAVALVDGAEDNAKITTFADLERAERLFRGEGEQRIGSGFDVHRLGPGDFVTLNGIRIPHSHGLVGHSDADAPMHALTDALLGCLNAGDIGRHFPPSDMRWKGADSAIFLRHAAALITALGGRILNVDITILCEQPKIGPHRARMSARLAEILEISATRVAVKATTTEELGFTGRGEGIAAQATALITLPF.

2 2-C-methyl-D-erythritol 4-phosphate cytidylyltransferase regions span residues 1–227 (MAKV…EGEQ) and 1–228 (MAKV…GEQR). Residues 228–384 (RIGSGFDVHR…QATALITLPF (157 aa)) form a 2-C-methyl-D-erythritol 2,4-cyclodiphosphate synthase region. A divalent metal cation contacts are provided by Asp234 and His236. Residues 234–236 (DVH) and 260–261 (HS) each bind 4-CDP-2-C-methyl-D-erythritol 2-phosphate. Position 268 (His268) interacts with a divalent metal cation. Residues 282–284 (DIG), 358–361 (TTTE), Phe365, and Arg368 contribute to the 4-CDP-2-C-methyl-D-erythritol 2-phosphate site.

This sequence in the N-terminal section; belongs to the IspD/TarI cytidylyltransferase family. IspD subfamily. In the C-terminal section; belongs to the IspF family. Requires a divalent metal cation as cofactor.

The enzyme catalyses 2-C-methyl-D-erythritol 4-phosphate + CTP + H(+) = 4-CDP-2-C-methyl-D-erythritol + diphosphate. The catalysed reaction is 4-CDP-2-C-methyl-D-erythritol 2-phosphate = 2-C-methyl-D-erythritol 2,4-cyclic diphosphate + CMP. The protein operates within isoprenoid biosynthesis; isopentenyl diphosphate biosynthesis via DXP pathway; isopentenyl diphosphate from 1-deoxy-D-xylulose 5-phosphate: step 2/6. Its pathway is isoprenoid biosynthesis; isopentenyl diphosphate biosynthesis via DXP pathway; isopentenyl diphosphate from 1-deoxy-D-xylulose 5-phosphate: step 4/6. Its function is as follows. Bifunctional enzyme that catalyzes the formation of 4-diphosphocytidyl-2-C-methyl-D-erythritol from CTP and 2-C-methyl-D-erythritol 4-phosphate (MEP) (IspD), and catalyzes the conversion of 4-diphosphocytidyl-2-C-methyl-D-erythritol 2-phosphate (CDP-ME2P) to 2-C-methyl-D-erythritol 2,4-cyclodiphosphate (ME-CPP) with a corresponding release of cytidine 5-monophosphate (CMP) (IspF). This Rhodospirillum rubrum (strain ATCC 11170 / ATH 1.1.1 / DSM 467 / LMG 4362 / NCIMB 8255 / S1) protein is Bifunctional enzyme IspD/IspF.